A 1058-amino-acid chain; its full sequence is Carbamoyl phosphate synthase large chain (1058 aa).

The segment at 1–401 (MPKRKDIQKI…SLLKACRSLE (401 aa)) is carboxyphosphate synthetic domain. ATP is bound by residues Arg129, Arg169, Gly175, Gly176, Arg208, Ile210, Glu215, Gly241, Ile242, His243, Gln284, and Glu298. The region spanning 133–327 (KQLMQELDQP…IAKLAAKIAV (195 aa)) is the ATP-grasp 1 domain. Mg(2+) is bound by residues Gln284, Glu298, and Asn300. Mn(2+) contacts are provided by Gln284, Glu298, and Asn300. An oligomerization domain region spans residues 402-546 (IGVCHNEMTS…YSTYELENES (145 aa)). The interval 547 to 929 (VQSNKESILV…ALYKAFEANN (383 aa)) is carbamoyl phosphate synthetic domain. One can recognise an ATP-grasp 2 domain in the interval 671–861 (EKALKELGIP…MAQIATKLIL (191 aa)). Residues Arg707, Ser746, Ile748, Glu752, Gly777, Val778, His779, Ser780, Gln820, and Glu832 each contribute to the ATP site. Mg(2+)-binding residues include Gln820, Glu832, and Asn834. Mn(2+) is bound by residues Gln820, Glu832, and Asn834. The MGS-like domain maps to 930–1058 (SHLSEFGQIV…ESRCFNIEAI (129 aa)). The tract at residues 930-1058 (SHLSEFGQIV…ESRCFNIEAI (129 aa)) is allosteric domain.

It belongs to the CarB family. In terms of assembly, composed of two chains; the small (or glutamine) chain promotes the hydrolysis of glutamine to ammonia, which is used by the large (or ammonia) chain to synthesize carbamoyl phosphate. Tetramer of heterodimers (alpha,beta)4. The cofactor is Mg(2+). It depends on Mn(2+) as a cofactor.

It catalyses the reaction hydrogencarbonate + L-glutamine + 2 ATP + H2O = carbamoyl phosphate + L-glutamate + 2 ADP + phosphate + 2 H(+). The enzyme catalyses hydrogencarbonate + NH4(+) + 2 ATP = carbamoyl phosphate + 2 ADP + phosphate + 2 H(+). Its pathway is amino-acid biosynthesis; L-arginine biosynthesis; carbamoyl phosphate from bicarbonate: step 1/1. It functions in the pathway pyrimidine metabolism; UMP biosynthesis via de novo pathway; (S)-dihydroorotate from bicarbonate: step 1/3. Large subunit of the glutamine-dependent carbamoyl phosphate synthetase (CPSase). CPSase catalyzes the formation of carbamoyl phosphate from the ammonia moiety of glutamine, carbonate, and phosphate donated by ATP, constituting the first step of 2 biosynthetic pathways, one leading to arginine and/or urea and the other to pyrimidine nucleotides. The large subunit (synthetase) binds the substrates ammonia (free or transferred from glutamine from the small subunit), hydrogencarbonate and ATP and carries out an ATP-coupled ligase reaction, activating hydrogencarbonate by forming carboxy phosphate which reacts with ammonia to form carbamoyl phosphate. The protein is Carbamoyl phosphate synthase large chain of Streptococcus pyogenes serotype M49 (strain NZ131).